A 286-amino-acid polypeptide reads, in one-letter code: MHVPVMPAEAIELLAIRPEGVYLDATAGLGGHSGLIARQLTTGTVIANDRDTRSLEMARANTAEWSDRMCFHYGSFGSLSDAVSQAGFEKVDGLLADLGVSRYQLTAPDRGFSFMADGPLDMRMDASIQTTAADLVNHTDEKTLADLIYQMGEERRARRIARAIVRARPLRSTLHLADVVERAVPRTGRLHPATKTFMALRMAVNDEPGELRRLLEIAPGLLKSGGRMVVISFMSSDDRMVKEKFKELGQSKQATILTKHPLQPSDEESFNNPASRSAKLRALEMR.

Residues 30-32 (GGH), Asp-49, Phe-88, Asp-97, and Gln-104 each bind S-adenosyl-L-methionine. A disordered region spans residues 260-286 (HPLQPSDEESFNNPASRSAKLRALEMR).

The protein belongs to the methyltransferase superfamily. RsmH family.

The protein resides in the cytoplasm. It carries out the reaction cytidine(1402) in 16S rRNA + S-adenosyl-L-methionine = N(4)-methylcytidine(1402) in 16S rRNA + S-adenosyl-L-homocysteine + H(+). Specifically methylates the N4 position of cytidine in position 1402 (C1402) of 16S rRNA. This Solibacter usitatus (strain Ellin6076) protein is Ribosomal RNA small subunit methyltransferase H.